The primary structure comprises 480 residues: Protein nucleotidyltransferase YdiU (480 aa).

Positions 86, 88, 89, 109, 121, 122, 172, and 179 each coordinate ATP. The Proton acceptor role is filled by Asp248. The Mg(2+) site is built by Asn249 and Asp258. Residue Asp258 participates in ATP binding.

The protein belongs to the SELO family. The cofactor is Mg(2+). Mn(2+) is required as a cofactor.

The catalysed reaction is L-seryl-[protein] + ATP = 3-O-(5'-adenylyl)-L-seryl-[protein] + diphosphate. The enzyme catalyses L-threonyl-[protein] + ATP = 3-O-(5'-adenylyl)-L-threonyl-[protein] + diphosphate. It carries out the reaction L-tyrosyl-[protein] + ATP = O-(5'-adenylyl)-L-tyrosyl-[protein] + diphosphate. It catalyses the reaction L-histidyl-[protein] + UTP = N(tele)-(5'-uridylyl)-L-histidyl-[protein] + diphosphate. The catalysed reaction is L-seryl-[protein] + UTP = O-(5'-uridylyl)-L-seryl-[protein] + diphosphate. The enzyme catalyses L-tyrosyl-[protein] + UTP = O-(5'-uridylyl)-L-tyrosyl-[protein] + diphosphate. Its function is as follows. Nucleotidyltransferase involved in the post-translational modification of proteins. It can catalyze the addition of adenosine monophosphate (AMP) or uridine monophosphate (UMP) to a protein, resulting in modifications known as AMPylation and UMPylation. This chain is Protein nucleotidyltransferase YdiU, found in Enterobacter sp. (strain 638).